The primary structure comprises 129 residues: Ribosome-binding factor A (129 aa).

The protein belongs to the RbfA family. As to quaternary structure, monomer. Binds 30S ribosomal subunits, but not 50S ribosomal subunits or 70S ribosomes.

It localises to the cytoplasm. One of several proteins that assist in the late maturation steps of the functional core of the 30S ribosomal subunit. Associates with free 30S ribosomal subunits (but not with 30S subunits that are part of 70S ribosomes or polysomes). Required for efficient processing of 16S rRNA. May interact with the 5'-terminal helix region of 16S rRNA. This Thermomicrobium roseum (strain ATCC 27502 / DSM 5159 / P-2) protein is Ribosome-binding factor A.